Consider the following 267-residue polypeptide: Putative hydro-lyase Arth_3576 (267 aa).

The protein belongs to the D-glutamate cyclase family.

This Arthrobacter sp. (strain FB24) protein is Putative hydro-lyase Arth_3576.